Consider the following 282-residue polypeptide: MDILDKLRGGVIMDVTNPEQAKIAENAGAVAVMALERIPADIRAAGGVSRMSDPKMIKEIIKAVKIPVMAKVRIGHFVEASILEAIGIDFIDESEVLSPADEVYHVDKNKFKVPFVCGARNLGEALRRIQEGAKMIRTKGEAGTGDVIQAVKHMRQIQSEMRQLTCLREDELYVAAKNFQVPYALVEYVHKHGKLPVPNFSAGGVATPADAALMVHLGADGVFVGSGIFKSGDPAKRAAAIVKAVKNYDNPAILAEVSENLGPAMVGINEEEIKVIMSERGV.

Asp14 provides a ligand contact to D-ribose 5-phosphate. The Schiff-base intermediate with D-ribose 5-phosphate role is filled by Lys71. Gly143 serves as a coordination point for D-ribose 5-phosphate. Arg155 contacts D-glyceraldehyde 3-phosphate. D-ribose 5-phosphate-binding positions include Gly204 and 225 to 226; that span reads GS.

Belongs to the PdxS/SNZ family. In terms of assembly, in the presence of PdxT, forms a dodecamer of heterodimers.

It carries out the reaction aldehydo-D-ribose 5-phosphate + D-glyceraldehyde 3-phosphate + L-glutamine = pyridoxal 5'-phosphate + L-glutamate + phosphate + 3 H2O + H(+). The protein operates within cofactor biosynthesis; pyridoxal 5'-phosphate biosynthesis. Its function is as follows. Catalyzes the formation of pyridoxal 5'-phosphate from ribose 5-phosphate (RBP), glyceraldehyde 3-phosphate (G3P) and ammonia. The ammonia is provided by the PdxT subunit. Can also use ribulose 5-phosphate and dihydroxyacetone phosphate as substrates, resulting from enzyme-catalyzed isomerization of RBP and G3P, respectively. The chain is Pyridoxal 5'-phosphate synthase subunit PdxS from Treponema denticola (strain ATCC 35405 / DSM 14222 / CIP 103919 / JCM 8153 / KCTC 15104).